The sequence spans 155 residues: Ribonuclease H (155 aa).

In terms of domain architecture, RNase H type-1 spans 1 to 142 (MLKQVEIFTD…CDELARAAAM (142 aa)). Mg(2+)-binding residues include D10, E48, D70, and D134.

Belongs to the RNase H family. In terms of assembly, monomer. Mg(2+) serves as cofactor.

The protein localises to the cytoplasm. The enzyme catalyses Endonucleolytic cleavage to 5'-phosphomonoester.. Endonuclease that specifically degrades the RNA of RNA-DNA hybrids. The chain is Ribonuclease H from Citrobacter koseri (strain ATCC BAA-895 / CDC 4225-83 / SGSC4696).